The primary structure comprises 284 residues: Ribose-5-phosphate isomerase (284 aa).

It belongs to the ribose 5-phosphate isomerase family.

It is found in the cytoplasm. It carries out the reaction aldehydo-D-ribose 5-phosphate = D-ribulose 5-phosphate. It functions in the pathway carbohydrate degradation; pentose phosphate pathway; D-ribose 5-phosphate from D-ribulose 5-phosphate (non-oxidative stage): step 1/1. The chain is Ribose-5-phosphate isomerase (RKI1) from Lodderomyces elongisporus (strain ATCC 11503 / CBS 2605 / JCM 1781 / NBRC 1676 / NRRL YB-4239) (Yeast).